The chain runs to 322 residues: MKKETKPRVVVIGGGTGLPVILKGLKKKDIHLTAIVTVADDGGSSGKIREQMDVLPPGDIRNVMLALSNVDPRVVDLFQYRFAVDGDLSGHVIGNLILTALSQLNDSYVDAINVLATVLKIRGKVIPATDQPLILNAEMEDGSIVHGESLIPLQGKHINRVYIEPENVKPYPTAVEAVKEADLIVIGPGSLYTSILPNLLLTELADEITASKAPKVYITNILTQIGETDFFSDADHIKVIHEHVGKSFIDKTLINTTTVPKELLFPEDVAQVEHNAKGMEELGVEAIYQDFLSTEDGLVRHAAEKVADALLAMLPNQTNEKE.

It belongs to the gluconeogenesis factor family.

It is found in the cytoplasm. Its function is as follows. Required for morphogenesis under gluconeogenic growth conditions. The protein is Gluconeogenesis factor of Listeria monocytogenes serovar 1/2a (strain ATCC BAA-679 / EGD-e).